Here is a 201-residue protein sequence, read N- to C-terminus: MAEKPYKCDKCGKGFTRSSSLLVHHSVHTGEKPFKCDRCGKGFSQSSKLHIHKRVHTGEKPYACEECGMSFSQRSNLHIHQRVHTGERPYKCGECGKGFSQSSNLHIHRCTHTGEKPYQCYECGKGFSQSSDLRIHLRVHTGEKPYHCGKCGQGFSQSSKLLIHQRVHTGEKPYECSKCGKGFSQSSNLHIHQRVHRKELH.

C2H2-type zinc fingers lie at residues 6–28, 34–56, 62–84, 90–112, 118–140, 146–168, and 174–196; these read YKCDKCGKGFTRSSSLLVHHSVH, FKCDRCGKGFSQSSKLHIHKRVH, YACEECGMSFSQRSNLHIHQRVH, YKCGECGKGFSQSSNLHIHRCTH, YQCYECGKGFSQSSDLRIHLRVH, YHCGKCGQGFSQSSKLLIHQRVH, and YECSKCGKGFSQSSNLHIHQRVH.

It belongs to the krueppel C2H2-type zinc-finger protein family. Preferentially expressed in transformed mouse cells.

It is found in the nucleus. Functionally, may be involved in transcriptional regulation. This chain is Zinc finger protein 239 (Znf239), found in Mus musculus (Mouse).